A 63-amino-acid polypeptide reads, in one-letter code: Large ribosomal subunit protein uL29 (63 aa).

This sequence belongs to the universal ribosomal protein uL29 family.

The polypeptide is Large ribosomal subunit protein uL29 (Klebsiella pneumoniae (strain 342)).